The following is a 210-amino-acid chain: Protein-L-isoaspartate O-methyltransferase (210 aa).

Ser52 is a catalytic residue.

It belongs to the methyltransferase superfamily. L-isoaspartyl/D-aspartyl protein methyltransferase family.

It localises to the cytoplasm. It catalyses the reaction [protein]-L-isoaspartate + S-adenosyl-L-methionine = [protein]-L-isoaspartate alpha-methyl ester + S-adenosyl-L-homocysteine. In terms of biological role, catalyzes the methyl esterification of L-isoaspartyl residues in peptides and proteins that result from spontaneous decomposition of normal L-aspartyl and L-asparaginyl residues. It plays a role in the repair and/or degradation of damaged proteins. In Protochlamydia amoebophila (strain UWE25), this protein is Protein-L-isoaspartate O-methyltransferase.